A 94-amino-acid chain; its full sequence is Co-chaperonin GroES (94 aa).

This sequence belongs to the GroES chaperonin family. As to quaternary structure, heptamer of 7 subunits arranged in a ring. Interacts with the chaperonin GroEL.

The protein resides in the cytoplasm. Its function is as follows. Together with the chaperonin GroEL, plays an essential role in assisting protein folding. The GroEL-GroES system forms a nano-cage that allows encapsulation of the non-native substrate proteins and provides a physical environment optimized to promote and accelerate protein folding. GroES binds to the apical surface of the GroEL ring, thereby capping the opening of the GroEL channel. The sequence is that of Co-chaperonin GroES from Enterococcus faecalis (strain ATCC 700802 / V583).